A 144-amino-acid chain; its full sequence is Large ribosomal subunit protein uL15 (144 aa).

A disordered region spans residues 1 to 52 (MRLNTLSPAEGAKHAPKRVGRGIGSGLGKTAGRGHKGQNSRSGGGVRRGFEG). Residues 21-31 (RGIGSGLGKTA) are compositionally biased toward gly residues.

This sequence belongs to the universal ribosomal protein uL15 family. As to quaternary structure, part of the 50S ribosomal subunit.

Binds to the 23S rRNA. The polypeptide is Large ribosomal subunit protein uL15 (Yersinia pseudotuberculosis serotype O:1b (strain IP 31758)).